We begin with the raw amino-acid sequence, 751 residues long: Palmitoyltransferase ZDHHC8B (751 aa).

The Cytoplasmic segment spans residues 1–13; it reads MPNSVGKRFKPTK. A helical transmembrane segment spans residues 14–34; the sequence is YIPVSTAATLLVGSTTLFFVF. Over 35-41 the chain is Extracellular; that stretch reads TCPWLTK. A helical transmembrane segment spans residues 42-62; that stretch reads AVSPVVPLYNGIVFLFVLANF. Over 63-148 the chain is Cytoplasmic; the sequence is SMATFMDPGV…NCIGRRNYRY (86 aa). In terms of domain architecture, DHHC spans 104–154; sequence KWCATCHFYRPPRCSHCSVCDNCVEEFDHHCPWVNNCIGRRNYRYFFLFLL. The S-palmitoyl cysteine intermediate role is filled by C134. A helical transmembrane segment spans residues 149 to 169; the sequence is FFLFLLSLSVHMVGVFSFGLL. At 170–185 the chain is on the extracellular side; sequence FVLHHLETLSALHTTV. The chain crosses the membrane as a helical span at residues 186-206; the sequence is TLVVMCVTGLFFIPVMGLTGF. The Cytoplasmic segment spans residues 207–751; that stretch reads HMVLVARGRT…VGGTTYEISV (545 aa). 5 disordered regions span residues 293–346, 437–461, 633–659, 666–685, and 703–736; these read RSKS…PSTP, CTPL…SPGT, RSSA…GMNR, RSPV…SPSY, and HLGT…HTSV. A compositionally biased stretch (low complexity) spans 326-338; it reads SQLTSSEESSLSS. Polar residues-rich tracts occupy residues 633 to 651, 669 to 681, and 724 to 733; these read RSSA…TSLH, VHQS…SVPR, and GTPSGTPSRH.

It belongs to the DHHC palmitoyltransferase family. ERF2/ZDHHC9 subfamily.

The protein localises to the golgi apparatus membrane. Its subcellular location is the mitochondrion membrane. It catalyses the reaction L-cysteinyl-[protein] + hexadecanoyl-CoA = S-hexadecanoyl-L-cysteinyl-[protein] + CoA. Its function is as follows. Palmitoyltransferase that catalyzes the addition of palmitate onto various protein substrates and therefore function in several unrelated biological processes. The chain is Palmitoyltransferase ZDHHC8B from Danio rerio (Zebrafish).